Consider the following 374-residue polypeptide: ORC1-type DNA replication protein 6 (374 aa).

ATP is bound by residues 66–70 (TGKTT), Tyr209, and Arg221.

The protein belongs to the CDC6/cdc18 family.

Its function is as follows. Involved in regulation of DNA replication. This is ORC1-type DNA replication protein 6 (orc6) from Halobacterium salinarum (strain ATCC 700922 / JCM 11081 / NRC-1) (Halobacterium halobium).